The following is a 408-amino-acid chain: MERAVKENHKPSNVKVFHPMTEGPKRIPVSQPPSTQVRPPVTGVSAQRILGPSNVPQRVMMQAQKPVLSNQKPTAQGLLRPATHGHQTSKPQGPNENRNPQQTSHSSTPNMEKKGSTDQGKTLAVPKEEGKKKQWCLEDFEIGRPLGKGKFGNVYLARERESKFILALKVLFKSQLEKAGVEHQLRREVEIQSHLRHPNILRLYGYFHDACRVYLILDYAPGGELFRELQKCTRFDDQRSALYIKQLAEALLYCHSKKVIHRDIKPENLLLGSNGELKIADFGWSVHAPSSRRTTLCGTLDYLPPEMIEGRMHDEKVDLWSLGVLCYEFLVGKPPFETDTHQETYRRISKVEFQYPPYVSEEAKDLVSKLLKHNPNHRLPLKGVLEHPWIVKNSQQPKKKDEPLAGAQ.

Basic and acidic residues predominate over residues 1–10 (MERAVKENHK). Positions 1–128 (MERAVKENHK…QGKTLAVPKE (128 aa)) are disordered. Polar residues predominate over residues 85 to 110 (GHQTSKPQGPNENRNPQQTSHSSTPN). Residues 140–390 (FEIGRPLGKG…LKGVLEHPWI (251 aa)) form the Protein kinase domain. ATP contacts are provided by residues Lys-150, Lys-169, and 217–220 (LDYA). Catalysis depends on Asp-263, which acts as the Proton acceptor. Residue Asp-281 coordinates ATP. Residues 287-300 (HAPSSRRTTLCGTL) are activation segment.

The protein belongs to the protein kinase superfamily. Ser/Thr protein kinase family. Aurora subfamily. In terms of assembly, interacts with kif2c and kif11. Post-translationally, phosphorylated. Autophosphorylated on a serine residue.

The protein resides in the cytoplasm. Its subcellular location is the cytoskeleton. The protein localises to the spindle pole. It is found in the microtubule organizing center. It localises to the centrosome. The catalysed reaction is L-seryl-[protein] + ATP = O-phospho-L-seryl-[protein] + ADP + H(+). The enzyme catalyses L-threonyl-[protein] + ATP = O-phospho-L-threonyl-[protein] + ADP + H(+). In terms of biological role, mitotic serine/threonine kinases that contributes to the regulation of cell cycle progression. Associates with the centrosome and the spindle microtubules during mitosis and plays a critical role in various mitotic events including the establishment of mitotic spindle, centrosome duplication, centrosome separation as well as maturation, chromosomal alignment, spindle assembly checkpoint, and cytokinesis. Phosphorylates numerous target proteins. Important for microtubule formation and/or stabilization. This Xenopus laevis (African clawed frog) protein is Aurora kinase A-B (aurka-b).